We begin with the raw amino-acid sequence, 154 residues long: Large ribosomal subunit protein uL22 (154 aa).

Belongs to the universal ribosomal protein uL22 family. In terms of assembly, part of the 50S ribosomal subunit.

This protein binds specifically to 23S rRNA. It makes multiple contacts with different domains of the 23S rRNA in the assembled 50S subunit and ribosome. Functionally, the globular domain of the protein is located near the polypeptide exit tunnel on the outside of the subunit, while an extended beta-hairpin is found that lines the wall of the exit tunnel in the center of the 70S ribosome. In Methanosphaera stadtmanae (strain ATCC 43021 / DSM 3091 / JCM 11832 / MCB-3), this protein is Large ribosomal subunit protein uL22.